Here is an 865-residue protein sequence, read N- to C-terminus: Eukaryotic translation initiation factor 3 subunit C (865 aa).

Disordered regions lie at residues Met-1 to Lys-92 and Glu-206 to Gly-243. Composition is skewed to acidic residues over residues Ser-16–Ala-54 and Asp-69–Ala-80. A compositionally biased stretch (basic and acidic residues) spans Val-82–Lys-92. Residues Ala-226–Glu-235 show a composition bias toward acidic residues. The 175-residue stretch at Phe-606 to Glu-780 folds into the PCI domain. The interval Ser-801 to Ala-865 is disordered. Residues Gln-808 to Phe-817 are compositionally biased toward polar residues. Over residues Gly-822 to Phe-841 the composition is skewed to gly residues.

Belongs to the eIF-3 subunit C family. In terms of assembly, component of the eukaryotic translation initiation factor 3 (eIF-3) complex.

It is found in the cytoplasm. In terms of biological role, component of the eukaryotic translation initiation factor 3 (eIF-3) complex, which is involved in protein synthesis of a specialized repertoire of mRNAs and, together with other initiation factors, stimulates binding of mRNA and methionyl-tRNAi to the 40S ribosome. The eIF-3 complex specifically targets and initiates translation of a subset of mRNAs involved in cell proliferation. This Pyricularia oryzae (strain 70-15 / ATCC MYA-4617 / FGSC 8958) (Rice blast fungus) protein is Eukaryotic translation initiation factor 3 subunit C.